A 137-amino-acid polypeptide reads, in one-letter code: Large ribosomal subunit protein uL13 (137 aa).

Belongs to the universal ribosomal protein uL13 family. As to quaternary structure, part of the 50S ribosomal subunit.

In terms of biological role, this protein is one of the early assembly proteins of the 50S ribosomal subunit, although it is not seen to bind rRNA by itself. It is important during the early stages of 50S assembly. This Methanocaldococcus jannaschii (strain ATCC 43067 / DSM 2661 / JAL-1 / JCM 10045 / NBRC 100440) (Methanococcus jannaschii) protein is Large ribosomal subunit protein uL13.